The following is a 297-amino-acid chain: MNMLFSLISEPFAYPFMQRAIVAAIVTGVVCAILSCYLVLKGWSLMGDAISHAVLPGIVLAFWLGIPLVIGAFVSGIFCAVATGYLKENSRVKEDTVMGIVFSGMFAFGLVLFSRIDTDQHLSHILFGNMLGISLTELKQTLWIAGFTLLVVLLKRKDFMLYCFDPNHARVIGLPVKFLHYGLLCLLALTIVASLQAVGVILVIAMLIAPGIIAFMICRSFDQMLVVATLVSVVACVLGTLISFHIDGATGPCIVIIQALFFVVALIYNHIKPIKDRKMAPLTKAVNPENTAPSNLP.

8 helical membrane passes run 20 to 40 (AIVA…YLVL), 58 to 78 (IVLA…SGIF), 96 to 116 (TVMG…FSRI), 133 to 153 (ISLT…LVVL), 172 to 192 (IGLP…LTIV), 197 to 217 (AVGV…AFMI), 224 to 244 (MLVV…LISF), and 248 to 268 (GATG…ALIY).

The protein belongs to the ABC-3 integral membrane protein family.

It is found in the cell inner membrane. Its function is as follows. Part of an ATP-driven transport system YfeABCD for chelated iron. The sequence is that of Chelated iron transport system membrane protein YfeD (yfeD) from Yersinia pestis.